The primary structure comprises 595 residues: MDGEGEGSGIRLSKRFAGGKVTGGSLEVDYKTKSGTAWSHSFLNQKPWHPLSYPNQRRKWIAEQTHAQHDRRAEEVAREFAQEQEFFKQAALISKKEREKIETMKAVSFMYVRPPGYDPESAKAAEYKDEKHKGQGSSTQDPVADDNVGSRPEESQGGGERTQERKKPRPKDVFGRALPTEEEFEVLKNAPRMETGIPGRVKPFAVEVRNVKCLRCGNFGHQSGDRDCPLKDAVMPNEELRLKRDDPLTAIIAHTDPSEPLKWELKQKPGLSPPRGGFDPDDPNQQIVAEDIFDEYGGFLEGSIPIEILKSMSSDKKRKSKKNKRHKKHSSRTVEETDESSTGSEDSREKRGSKKRKKLKKKSKKQYDSDSLSFEGSGSDSYRLSRRRHTKHVDPSASLKSEVYHQGNSHREKHYYDEKHQKRKEIVDRPSASSDDSDYYRSNSSRKKRSEDDYKSHHRERKQVHSNDPVSEKSQKQHYSESGKIQRVEKEHRYDERRHRYVDMESENRNRSEKKPRYDDRDSEKHHRSVKGKEKHVYEASDDPEEFSDRYRSTKKTESDSESNRRSRKKKHELSSEEEEGESRKHRYSTNRRRN.

The tract at residues 112–180 (VRPPGYDPES…KDVFGRALPT (69 aa)) is disordered. 2 stretches are compositionally biased toward basic and acidic residues: residues 120–133 (ESAK…EKHK) and 161–174 (RTQE…KDVF). The segment at 211–228 (VKCLRCGNFGHQSGDRDC) adopts a CCHC-type; degenerate zinc-finger fold. 2 disordered regions span residues 254-290 (HTDP…IVAE) and 310-595 (KSMS…RRRN). Basic and acidic residues predominate over residues 256-267 (DPSEPLKWELKQ). 2 stretches are compositionally biased toward basic residues: residues 316–331 (KKRK…KHSS) and 351–364 (RGSK…KKSK). Composition is skewed to basic and acidic residues over residues 414-428 (HYYD…EIVD), 470-539 (VSEK…HVYE), and 547-565 (FSDR…ESNR). Residues 584-595 (RKHRYSTNRRRN) are compositionally biased toward basic residues.

This is an uncharacterized protein from Arabidopsis thaliana (Mouse-ear cress).